A 98-amino-acid polypeptide reads, in one-letter code: NADH-ubiquinone oxidoreductase chain 4L (98 aa).

3 helical membrane-spanning segments follow: residues 2–22, 29–49, and 61–81; these read SLVYVNIMIAFSVSFLGLLMF, SLLCLEGMMLSLFILGTILIL, and IIMLVFAACEAAVGLSLLVMV.

It belongs to the complex I subunit 4L family. As to quaternary structure, core subunit of respiratory chain NADH dehydrogenase (Complex I) which is composed of 45 different subunits.

It is found in the mitochondrion inner membrane. The catalysed reaction is a ubiquinone + NADH + 5 H(+)(in) = a ubiquinol + NAD(+) + 4 H(+)(out). Core subunit of the mitochondrial membrane respiratory chain NADH dehydrogenase (Complex I) which catalyzes electron transfer from NADH through the respiratory chain, using ubiquinone as an electron acceptor. Part of the enzyme membrane arm which is embedded in the lipid bilayer and involved in proton translocation. This is NADH-ubiquinone oxidoreductase chain 4L (MT-ND4L) from Galemys pyrenaicus (Iberian desman).